A 361-amino-acid chain; its full sequence is Peptide chain release factor 1 (361 aa).

Glutamine 235 carries the N5-methylglutamine modification.

This sequence belongs to the prokaryotic/mitochondrial release factor family. Post-translationally, methylated by PrmC. Methylation increases the termination efficiency of RF1.

It localises to the cytoplasm. In terms of biological role, peptide chain release factor 1 directs the termination of translation in response to the peptide chain termination codons UAG and UAA. In Chlamydia abortus (strain DSM 27085 / S26/3) (Chlamydophila abortus), this protein is Peptide chain release factor 1.